An 812-amino-acid polypeptide reads, in one-letter code: 1,4-alpha-glucan branching enzyme GlgB (812 aa).

The span at 1–11 shows a compositional bias: polar residues; sequence MNNGDVNNGTA. Residues 1 to 83 are disordered; sequence MNNGDVNNGT…SALPADPPAV (83 aa). Low complexity predominate over residues 49–64; sequence SSASAQPGQTADDPAV. The span at 65–83 shows a compositional bias: pro residues; that stretch reads PSAPPSAPPSALPADPPAV. Catalysis depends on Asp-490, which acts as the Nucleophile. Glu-543 (proton donor) is an active-site residue.

The protein belongs to the glycosyl hydrolase 13 family. GlgB subfamily. In terms of assembly, monomer.

It catalyses the reaction Transfers a segment of a (1-&gt;4)-alpha-D-glucan chain to a primary hydroxy group in a similar glucan chain.. Its pathway is glycan biosynthesis; glycogen biosynthesis. In terms of biological role, catalyzes the formation of the alpha-1,6-glucosidic linkages in glycogen by scission of a 1,4-alpha-linked oligosaccharide from growing alpha-1,4-glucan chains and the subsequent attachment of the oligosaccharide to the alpha-1,6 position. In Frankia casuarinae (strain DSM 45818 / CECT 9043 / HFP020203 / CcI3), this protein is 1,4-alpha-glucan branching enzyme GlgB.